Reading from the N-terminus, the 194-residue chain is Adenylate kinase isoenzyme 1 (194 aa).

At Met-1 the chain carries N-acetylmethionine. 18-23 (GSGKGT) contributes to the ATP binding site. Ser-38 carries the post-translational modification Phosphoserine. Positions 38–67 (STGDLLRSEVSSGSARGKKLSEIMEKGQLV) are NMP. Residues Thr-39, Arg-44, 65-67 (QLV), 94-97 (GYPR), and Gln-101 contribute to the AMP site. The LID stretch occupies residues 131 to 141 (KRGETSGRVDD). Arg-132 provides a ligand contact to ATP. The AMP site is built by Arg-138 and Arg-149. An ATP-binding site is contributed by Gly-177.

The protein belongs to the adenylate kinase family. AK1 subfamily. As to quaternary structure, monomer. It depends on Mg(2+) as a cofactor.

The protein resides in the cytoplasm. The catalysed reaction is a ribonucleoside 5'-phosphate + ATP = a ribonucleoside 5'-diphosphate + ADP. It catalyses the reaction AMP + ATP = 2 ADP. It carries out the reaction dAMP + ATP = dADP + ADP. The enzyme catalyses dATP + AMP = dADP + ADP. The catalysed reaction is dAMP + dATP = 2 dADP. It catalyses the reaction a 2'-deoxyribonucleoside 5'-diphosphate + ATP = a 2'-deoxyribonucleoside 5'-triphosphate + ADP. It carries out the reaction a ribonucleoside 5'-diphosphate + ATP = a ribonucleoside 5'-triphosphate + ADP. The enzyme catalyses CDP + GTP = CTP + GDP. The catalysed reaction is GDP + ATP = GTP + ADP. It catalyses the reaction UDP + ATP = UTP + ADP. It carries out the reaction GTP + UDP = UTP + GDP. The enzyme catalyses dTDP + GTP = dTTP + GDP. The catalysed reaction is dCDP + GTP = dCTP + GDP. It catalyses the reaction dGDP + ATP = dGTP + ADP. It carries out the reaction dADP + GTP = dATP + GDP. The enzyme catalyses thiamine diphosphate + ADP = thiamine triphosphate + AMP. In terms of biological role, catalyzes the reversible transfer of the terminal phosphate group between ATP and AMP. Also displays broad nucleoside diphosphate kinase activity. Plays an important role in cellular energy homeostasis and in adenine nucleotide metabolism. Also catalyzes at a very low rate the synthesis of thiamine triphosphate (ThTP) from thiamine diphosphate (ThDP) and ADP. The sequence is that of Adenylate kinase isoenzyme 1 from Homo sapiens (Human).